We begin with the raw amino-acid sequence, 617 residues long: ATP-dependent rRNA helicase SPB4 (617 aa).

The short motif at 10–38 (WKNLQYDLQPWIKEAIASLGFPTMTPVQA) is the Q motif element. One can recognise a Helicase ATP-binding domain in the interval 41–233 (IPLLSGNKDV…RAGMNNPVKV (193 aa)). 54-61 (AVTGSGKT) contributes to the ATP binding site. A DEAD box motif is present at residues 181 to 184 (DEAD). One can recognise a Helicase C-terminal domain in the interval 261–421 (KITTLIKLLH…EMPTPDLNQS (161 aa)). Positions 515–585 (ADNQQEASRL…EKQIMEESSD (71 aa)) form a coiled coil. The interval 547–617 (KNEAWSSKTE…GSMQGSFDDL (71 aa)) is disordered. Residues 555-566 (TETKETKQERRE) show a composition bias toward basic and acidic residues. Residues 608 to 617 (GSMQGSFDDL) are compositionally biased toward polar residues.

The protein belongs to the DEAD box helicase family. DDX55/SPB4 subfamily. In terms of assembly, component of pre-60S ribosomal complexes.

The protein resides in the nucleus. It is found in the nucleolus. The enzyme catalyses ATP + H2O = ADP + phosphate + H(+). ATP-binding RNA helicase involved in the biogenesis of 60S ribosomal subunits. Binds 90S pre-ribosomal particles and dissociates from pre-60S ribosomal particles after processing of 27SB pre-rRNA. Required for the normal formation of 18S rRNA through the processing of pre-rRNAs at sites A0, A1 and A2, and the normal formation of 25S and 5.8S rRNAs through the processing of pre-rRNAs at sites C1 and C2. The chain is ATP-dependent rRNA helicase SPB4 from Scheffersomyces stipitis (strain ATCC 58785 / CBS 6054 / NBRC 10063 / NRRL Y-11545) (Yeast).